The sequence spans 233 residues: Glucosamine-6-phosphate deaminase (233 aa).

The active-site Proton acceptor; for enolization step is Asp-62. Asn-128 functions as the For ring-opening step in the catalytic mechanism. His-130 functions as the Proton acceptor; for ring-opening step in the catalytic mechanism. Catalysis depends on Glu-135, which acts as the For ring-opening step.

This sequence belongs to the glucosamine/galactosamine-6-phosphate isomerase family. NagB subfamily.

It carries out the reaction alpha-D-glucosamine 6-phosphate + H2O = beta-D-fructose 6-phosphate + NH4(+). It functions in the pathway amino-sugar metabolism; N-acetylneuraminate degradation; D-fructose 6-phosphate from N-acetylneuraminate: step 5/5. Catalyzes the reversible isomerization-deamination of glucosamine 6-phosphate (GlcN6P) to form fructose 6-phosphate (Fru6P) and ammonium ion. This is Glucosamine-6-phosphate deaminase from Streptococcus pneumoniae serotype 4 (strain ATCC BAA-334 / TIGR4).